The sequence spans 198 residues: Phosphoheptose isomerase (198 aa).

The region spanning 36-198 (MIGSLLNNGK…DCLLLGVEDQ (163 aa)) is the SIS domain. 51 to 53 (NGG) is a substrate binding site. 2 residues coordinate Zn(2+): His-60 and Glu-64. Residues Glu-64, 93 to 94 (ND), 119 to 121 (STS), Ser-124, and Gln-174 each bind substrate. The Zn(2+) site is built by Gln-174 and His-182.

This sequence belongs to the SIS family. GmhA subfamily. Homotetramer. Zn(2+) is required as a cofactor.

It localises to the cytoplasm. The enzyme catalyses 2 D-sedoheptulose 7-phosphate = D-glycero-alpha-D-manno-heptose 7-phosphate + D-glycero-beta-D-manno-heptose 7-phosphate. It participates in carbohydrate biosynthesis; D-glycero-D-manno-heptose 7-phosphate biosynthesis; D-glycero-alpha-D-manno-heptose 7-phosphate and D-glycero-beta-D-manno-heptose 7-phosphate from sedoheptulose 7-phosphate: step 1/1. Catalyzes the isomerization of sedoheptulose 7-phosphate in D-glycero-D-manno-heptose 7-phosphate. The polypeptide is Phosphoheptose isomerase (Aromatoleum aromaticum (strain DSM 19018 / LMG 30748 / EbN1) (Azoarcus sp. (strain EbN1))).